Here is a 202-residue protein sequence, read N- to C-terminus: Eukaryotic translation initiation factor isoform 4E (202 aa).

The segment at 1 to 24 (MATEAPPPVDTTEVPPFTAAETAV) is disordered. MRNA-binding positions include 46-51 (QGAAWG), lysine 78, and 96-97 (WE). The cysteines at positions 101 and 140 are disulfide-linked. MRNA contacts are provided by residues 147–152 (RRSQDK) and 191–194 (KRER).

This sequence belongs to the eukaryotic initiation factor 4E family. In terms of assembly, EIF4F is a multi-subunit complex, the composition of which varies with external and internal environmental conditions. It is composed of at least EIF4A, EIF4E and EIF4G. EIF4E is also known to interact with other partners. In higher plants two isoforms of EIF4F have been identified, named isoform EIF4F and isoform EIF(iso)4F. Isoform EIF4F has subunits p220 and p26, whereas isoform EIF(iso)4F has subunits p82 and p28. As to quaternary structure, (Microbial infection) Interacts with viral genome-linked protein (VPg); this interaction is possible in susceptible hosts but impaired in resistant plants. Post-translationally, according to the redox status, the Cys-101-Cys-140 disulfide bridge may have a role in regulating protein function by affecting its ability to bind capped mRNA.

It is found in the cytoplasm. The protein resides in the nucleus. Component of the protein complex eIF4F, which is involved in the recognition of the mRNA cap, ATP-dependent unwinding of 5'-terminal secondary structure and recruitment of mRNA to the ribosome. Recognizes and binds the 7-methylguanosine-containing mRNA cap during an early step in the initiation of protein synthesis and facilitates ribosome binding by inducing the unwinding of the mRNAs secondary structures. Key component of recessive resistance to potyviruses. Functionally, (Microbial infection) Susceptibility host factor required for viral infection by recruiting viral RNAs to the host ribosomal complex via an interaction with viral genome-linked protein (VPg). This chain is Eukaryotic translation initiation factor isoform 4E, found in Capsicum annuum (Capsicum pepper).